We begin with the raw amino-acid sequence, 355 residues long: IgG receptor FcRn large subunit p51 (355 aa).

A signal peptide spans 1–24 (MRVPRSQPWGLALLLLLLPGTLRA). The interval 25 to 111 (AESHRSLLYH…ALKVFGDRDS (87 aa)) is alpha-1. Topologically, residues 25-300 (AESHRSLLYH…LESPAKSSVP (276 aa)) are extracellular. An alpha-2 region spans residues 112–201 (YTLQGLLGCE…ERGRGNLEWK (90 aa)). Asparagine 126 is a glycosylation site (N-linked (GlcNAc...) asparagine). The interval 202–291 (EPPSMRLKAR…GPAQPLTVEL (90 aa)) is alpha-3. Residues 203–292 (PPSMRLKARP…PAQPLTVELE (90 aa)) enclose the Ig-like C1-type domain. The cysteines at positions 222 and 276 are disulfide-linked. Residues 293-298 (SPAKSS) form a connecting peptide region. The helical transmembrane segment at 301 to 321 (VIGISIGFLLLMTVAAGGALL) threads the bilayer. Over 322–355 (WRRRKGLPAPWIAFRGDDIGALLPTPGLSKDAES) the chain is Cytoplasmic.

The protein belongs to the immunoglobulin superfamily. In terms of assembly, fcRn complex consists of two subunits: p51, and p14 which is equivalent to beta-2-microglobulin. It forms an MHC class I-like heterodimer. Interacts with albumin/ALB; this interaction regulates ALB homeostasis. Expressed in liver and mammary gland of non-lactating animals. Expressed in hepatocytes and in epithelial cells of portal bile ductuli. Not expressed in the brances of portal veins or hepatic arteries. Expressed in the epithelial cells of the acini and ducti in the mammary gland with expression emphasized at the apical side. Not expressed in blood vessels of mammary gland.

It is found in the cell membrane. It localises to the endosome membrane. Cell surface receptor that transfers passive humoral immunity from the mother to the newborn. Binds to the Fc region of monomeric immunoglobulin gamma and mediates its selective uptake from milk. IgG in the milk is bound at the apical surface of the intestinal epithelium. The resultant FcRn-IgG complexes are transcytosed across the intestinal epithelium and IgG is released from FcRn into blood or tissue fluids. Throughout life, contributes to effective humoral immunity by recycling IgG and extending its half-life in the circulation. Mechanistically, monomeric IgG binding to FcRn in acidic endosomes of endothelial and hematopoietic cells recycles IgG to the cell surface where it is released into the circulation. In addition of IgG, regulates homeostasis of the other most abundant circulating protein albumin/ALB. This is IgG receptor FcRn large subunit p51 from Camelus dromedarius (Dromedary).